The sequence spans 182 residues: Ribulose bisphosphate carboxylase small subunit, chloroplastic (182 aa).

A chloroplast-targeting transit peptide spans 1-58; the sequence is MASSMISSATVATVSRATPAQATMVAPFTGLKSTAAFPATRKSNNDITSLASNGGRVQ.

This sequence belongs to the RuBisCO small chain family. In terms of assembly, heterohexadecamer of 8 large and 8 small subunits.

The protein localises to the plastid. It is found in the chloroplast. RuBisCO catalyzes two reactions: the carboxylation of D-ribulose 1,5-bisphosphate, the primary event in carbon dioxide fixation, as well as the oxidative fragmentation of the pentose substrate. Both reactions occur simultaneously and in competition at the same active site. Although the small subunit is not catalytic it is essential for maximal activity. The sequence is that of Ribulose bisphosphate carboxylase small subunit, chloroplastic from Fagus crenata (Japanese beech).